The following is a 385-amino-acid chain: 1-deoxy-D-xylulose 5-phosphate reductoisomerase (385 aa).

The NADPH site is built by T10, G11, I13, G36, and N38. K123 provides a ligand contact to 1-deoxy-D-xylulose 5-phosphate. NADPH is bound at residue E124. Residue D148 participates in Mn(2+) binding. 1-deoxy-D-xylulose 5-phosphate contacts are provided by S149, E150, S172, and H195. Position 150 (E150) interacts with Mn(2+). G201 contributes to the NADPH binding site. 1-deoxy-D-xylulose 5-phosphate is bound by residues S208, N213, K214, and E217. E217 is a binding site for Mn(2+).

It belongs to the DXR family. The cofactor is Mg(2+). Mn(2+) serves as cofactor.

The enzyme catalyses 2-C-methyl-D-erythritol 4-phosphate + NADP(+) = 1-deoxy-D-xylulose 5-phosphate + NADPH + H(+). The protein operates within isoprenoid biosynthesis; isopentenyl diphosphate biosynthesis via DXP pathway; isopentenyl diphosphate from 1-deoxy-D-xylulose 5-phosphate: step 1/6. Catalyzes the NADPH-dependent rearrangement and reduction of 1-deoxy-D-xylulose-5-phosphate (DXP) to 2-C-methyl-D-erythritol 4-phosphate (MEP). The protein is 1-deoxy-D-xylulose 5-phosphate reductoisomerase of Anaplasma phagocytophilum (strain HZ).